The primary structure comprises 213 residues: Protein HSH49 (213 aa).

2 RRM domains span residues 9–88 (NTVY…QVTN) and 108–185 (AKLF…YAFK).

In terms of assembly, interacts with RDS3.

The protein localises to the nucleus. Functionally, possible SF3b-like factor. The polypeptide is Protein HSH49 (HSH49) (Saccharomyces cerevisiae (strain ATCC 204508 / S288c) (Baker's yeast)).